The chain runs to 132 residues: Prefoldin subunit alpha (132 aa).

Belongs to the prefoldin subunit alpha family. In terms of assembly, heterohexamer of two alpha and four beta subunits.

Its subcellular location is the cytoplasm. Its function is as follows. Molecular chaperone capable of stabilizing a range of proteins. Seems to fulfill an ATP-independent, HSP70-like function in archaeal de novo protein folding. This Pyrobaculum islandicum (strain DSM 4184 / JCM 9189 / GEO3) protein is Prefoldin subunit alpha.